Reading from the N-terminus, the 218-residue chain is Ribose-5-phosphate isomerase A (218 aa).

Residues 28–31, 81–84, and 94–97 each bind substrate; these read SGST, DGAD, and KGGG. Residue Glu103 is the Proton acceptor of the active site. Substrate is bound at residue Lys121.

This sequence belongs to the ribose 5-phosphate isomerase family. As to quaternary structure, homodimer.

It catalyses the reaction aldehydo-D-ribose 5-phosphate = D-ribulose 5-phosphate. Its pathway is carbohydrate degradation; pentose phosphate pathway; D-ribose 5-phosphate from D-ribulose 5-phosphate (non-oxidative stage): step 1/1. Its function is as follows. Catalyzes the reversible conversion of ribose-5-phosphate to ribulose 5-phosphate. This is Ribose-5-phosphate isomerase A from Dichelobacter nodosus (strain VCS1703A).